The chain runs to 1345 residues: MLDVNAFDKIRIGLATADDIRGWSHGEVKKPETINYRTLKPEKDGLFGEQIFGPTRDWECACGKYKRVRFKGIVCERCGVEVTRSRVRRERMGHIELAAPVTHIWFFKGVPSRLGYLLNVTPKDLERVIYFASYMVTEVNEDERHNDLPGLQDEFDSEIKRLEQRRDSDIEARAKKVEEDLAALEEAGEAKGPARTKLRNGAERDMAAIRTRYNDQIARVDAVFDKFKKLKPGDMVDDVDLWREMQDRYGDYFDGCMGAEAIKKRLQSLDLETISKELREEIKDASEQRKTKALKRLKVVNAFLTTGNKPEAMVLDVIPVIPPDLRPMVQLDGGRFATSDLNDLYRRVINRNNRLKRLIELGAPEIMLNNEKRMLQEAVDSLFDNGRRGRPVTGASNRPLKSLSDMLKGKQGRFRQNLLGKRVDYSGRSVIVVGPSLRMHQCGLPKPMALELFKPFVIKRLVDLNYAQNMKSAKRLVDRGDAEVWGVLEEVISEHPVLLNRAPTLHRLGIQAFEPILVEGKAIHLPPLACAAFNADFDGDQMAVHLPLSAEAQAEARSLMMASDNILKPADGHTVTMPSQDMILGLYYLSTVLEGVKGQGRVFSSLEEAEMALDRHEIDMQAKVLIRLPESFVLPKNWEPGEVKVLDPREGEDEVVKEERFHDGTVLFATSYGRILFNETLPTDYPFVNEQVAKGRLSKIVDDIAMRYSTQQVAATLDALKDLGFTRAPWSGVSFAFSDVNEPPERDEKIAEYEAKADKVNANYEMGLLTEEARRQELIDLWTECTAEVSKEVEEKFDPTSNLAIIVQSGARGNMMQINQIAGMRGLVANPKGEIIPRPVKSNYRDGLSVLEYFISQHGARKGLADTALRTAESGYLTRRLVDVSQDVIVREEDCGTKAGLPIRVAERDNDGNLVLVKAADGGPYSRLLAADVIDPADGQTVLYKRDDALSMDVLNDLVAHGVEEVKCRSVLTCESKRGVCAKCYGWSLATNKLVDVGETVGIVAAQSIGEPGTQLTLRSFHSGGVAAASDITQGLPRVTELFEARTPKGEAPITEFAGSIKIVENDRGRQIILTPDADSGAPKEDGVIKPITYQVSKRVPLKVADGDHIKVGTQLVEGSVDPKKILTILGKRAAQVNIVEEVHTVYRSQGVDIHDKHIEVIVHQMTRRVTIIDSGDTDLLPGELVDNARFREINRNIVKNGGRPAVGRPALMGITKASLATDSWLSAASFQETTRVLTEAALSEKVDDLKGLKENVIIGKLIPAGTGLARYRNAVVEPDKAIRDTIYPNFGLGGDGDLGDASFSDADLSDLNFSNLEFGDLKLGDDFNPDDFYSDQGGQPDIEE.

4 residues coordinate Zn(2+): Cys60, Cys62, Cys75, and Cys78. Positions 536, 538, and 540 each coordinate Mg(2+). The Zn(2+) site is built by Cys895, Cys974, Cys981, and Cys984.

The protein belongs to the RNA polymerase beta' chain family. In terms of assembly, the RNAP catalytic core consists of 2 alpha, 1 beta, 1 beta' and 1 omega subunit. When a sigma factor is associated with the core the holoenzyme is formed, which can initiate transcription. Mg(2+) serves as cofactor. Requires Zn(2+) as cofactor.

It carries out the reaction RNA(n) + a ribonucleoside 5'-triphosphate = RNA(n+1) + diphosphate. Functionally, DNA-dependent RNA polymerase catalyzes the transcription of DNA into RNA using the four ribonucleoside triphosphates as substrates. This Bifidobacterium longum (strain DJO10A) protein is DNA-directed RNA polymerase subunit beta'.